The following is a 444-amino-acid chain: Chromosomal replication initiator protein DnaA (444 aa).

Residues 1 to 66 (MKSEIIESLK…SKTLRELFGK (66 aa)) form a domain I, interacts with DnaA modulators region. The domain II stretch occupies residues 66–100 (KPMDFRIEHASAKTEEKLDSNEDEPLVKKRPLILT). The interval 101 to 317 (PLNPILTFEN…GALVKLIMYQ (217 aa)) is domain III, AAA+ region. The ATP site is built by Gly-144, Gly-146, Lys-147, and Thr-148. A domain IV, binds dsDNA region spans residues 318-444 (QISGEKVDLQ…VTGQILDQSV (127 aa)).

It belongs to the DnaA family. Oligomerizes as a right-handed, spiral filament on DNA at oriC.

The protein localises to the cytoplasm. Plays an essential role in the initiation and regulation of chromosomal replication. ATP-DnaA binds to the origin of replication (oriC) to initiate formation of the DNA replication initiation complex once per cell cycle. Binds the DnaA box (a 9 base pair repeat at the origin) and separates the double-stranded (ds)DNA. Forms a right-handed helical filament on oriC DNA; dsDNA binds to the exterior of the filament while single-stranded (ss)DNA is stabiized in the filament's interior. The ATP-DnaA-oriC complex binds and stabilizes one strand of the AT-rich DNA unwinding element (DUE), permitting loading of DNA polymerase. After initiation quickly degrades to an ADP-DnaA complex that is not apt for DNA replication. Binds acidic phospholipids. The chain is Chromosomal replication initiator protein DnaA from Pseudothermotoga lettingae (strain ATCC BAA-301 / DSM 14385 / NBRC 107922 / TMO) (Thermotoga lettingae).